Reading from the N-terminus, the 184-residue chain is Flagellar transcriptional regulator FlhC (184 aa).

Zn(2+) contacts are provided by C144, C147, C163, and C166.

The protein belongs to the FlhC family. In terms of assembly, heterohexamer composed of two FlhC and four FlhD subunits. Each FlhC binds a FlhD dimer, forming a heterotrimer, and a hexamer assembles by dimerization of two heterotrimers. The cofactor is Zn(2+).

It is found in the cytoplasm. Functions in complex with FlhD as a master transcriptional regulator that regulates transcription of several flagellar and non-flagellar operons by binding to their promoter region. Activates expression of class 2 flagellar genes, including fliA, which is a flagellum-specific sigma factor that turns on the class 3 genes. Also regulates genes whose products function in a variety of physiological pathways. This Verminephrobacter eiseniae (strain EF01-2) protein is Flagellar transcriptional regulator FlhC.